The chain runs to 170 residues: Non-classical export protein 102 (170 aa).

Residues 1–11 are Cytoplasmic-facing; sequence MLAIGDVILRA. The MARVEL domain occupies 6–141; the sequence is DVILRAFNFV…TFIFIASAIF (136 aa). The helical transmembrane segment at 12–32 threads the bilayer; sequence FNFVFLVIALGLTGSLAATTI. Residues 33 to 38 lie on the Extracellular side of the membrane; that stretch reads TQHNPQ. The helical transmembrane segment at 39–61 threads the bilayer; the sequence is INFAVFAAAFGLLTSSFYGVFAY. Over 62-76 the chain is Cytoplasmic; the sequence is FVAAFAWPVILFVFD. A helical membrane pass occupies residues 77–97; the sequence is FLNFVFTFAAATAIAAGIRAH. The Extracellular portion of the chain corresponds to 98-125; sequence SCSNQDYLDDNNIAQGSSGRCRKAQAST. The helical transmembrane segment at 126-146 threads the bilayer; that stretch reads AFLYFSTFIFIASAIFSAISL. At 147–170 the chain is on the cytoplasmic side; the sequence is SKGGLFGHSSRPAPRTGVPTMSQV.

This sequence belongs to the NCE102 family.

The protein resides in the cell membrane. Its function is as follows. Involved in membrane organization. Involved in a novel pathway of export of proteins that lack a cleavable signal sequence. Non-classical export pathway also functions as an alternative clearance/detoxification pathway to eliminate damaged material, when the basic repair pathway is not sufficient. Regulates actin organization and subsequent morphogenesis and pathogenesis. This is Non-classical export protein 102 from Candida albicans (strain SC5314 / ATCC MYA-2876) (Yeast).